A 362-amino-acid polypeptide reads, in one-letter code: Probable dual-specificity RNA methyltransferase RlmN (362 aa).

Glutamate 105 acts as the Proton acceptor in catalysis. Residues 111 to 344 (HNYGNSVCVT…VTIRREQGHD (234 aa)) form the Radical SAM core domain. Cysteine 118 and cysteine 349 form a disulfide bridge. 3 residues coordinate [4Fe-4S] cluster: cysteine 125, cysteine 129, and cysteine 132. S-adenosyl-L-methionine-binding positions include 175-176 (GE), serine 207, 230-232 (SLH), and asparagine 306. Cysteine 349 acts as the S-methylcysteine intermediate in catalysis.

The protein belongs to the radical SAM superfamily. RlmN family. Requires [4Fe-4S] cluster as cofactor.

Its subcellular location is the cytoplasm. The enzyme catalyses adenosine(2503) in 23S rRNA + 2 reduced [2Fe-2S]-[ferredoxin] + 2 S-adenosyl-L-methionine = 2-methyladenosine(2503) in 23S rRNA + 5'-deoxyadenosine + L-methionine + 2 oxidized [2Fe-2S]-[ferredoxin] + S-adenosyl-L-homocysteine. The catalysed reaction is adenosine(37) in tRNA + 2 reduced [2Fe-2S]-[ferredoxin] + 2 S-adenosyl-L-methionine = 2-methyladenosine(37) in tRNA + 5'-deoxyadenosine + L-methionine + 2 oxidized [2Fe-2S]-[ferredoxin] + S-adenosyl-L-homocysteine. Specifically methylates position 2 of adenine 2503 in 23S rRNA and position 2 of adenine 37 in tRNAs. The chain is Probable dual-specificity RNA methyltransferase RlmN from Halalkalibacterium halodurans (strain ATCC BAA-125 / DSM 18197 / FERM 7344 / JCM 9153 / C-125) (Bacillus halodurans).